An 859-amino-acid chain; its full sequence is MCAGFYVAVHPWLETQSLHKVGHTGNLAARLHDGSYTTCFTDEWRYCFTLETPTKKDAQKIEAGVLYCAQFFRVKNKELLCLLPEKIKQLAEDVANCLNISYTLCDAPTYEMNDSTIVVEPSSPSDPLISKEKLRHLVITPVEDEDRFADDVLFFSTGETRTTIEDRLYQREAANMGYQELQRSGRAILQMACRCGKTRVAYLILSNYLQGKVLYLVPGLSLLRQTLEKLYLYGISLKNVMLVGSDQTRIVLNHDTIEMTTNPVIIVKRIQEASSLLVIATYQSSTLLVDDFDLIISDECHRICGEWETRPFTHVLLNFKKGHRLFLTATPRYDTPLSMKNRELFGGVAFRYYLREGIEAGYVNDFELQMVAAPKLAHQLSNREETTKQIIVKQIIMALAYLKTNVRSPKMLVFTRDIKQAKELYAELVDLGVYALIAHSTLPRQVILKTFTEFCSSKEPVILLNCRLFQEGVEVPELNAVFFAAPRHSPRDIIQSICRPLNKQVQKPHATIFLPLEVNTENVCLDKFSSIIPFADALASEDPRFYEHLLNPSEVAYPINWIGAHGSVAELLQLARHAIRYGTQGKIDRLTRSERLPWKAAFAELKRTVEICCRYPKINDGFHFGGATLRFDTWYKWVIKSYLQYKNNEPSSLEPYQVLDLESLQDWTTRGVGGPYPWEESMAFLETWLAQNKGELVAIDIHQGGWIGLDATPMERLSGVLTTVSQRDGRSYGKNRKLRPKKGFMIPPQQAKDLDRIFGKHNLKWRKDRDNGFLKEDEHGNYTGEPTCIQEAYQTFKEYVKTNPEYIEKYWPGYAKGKHKHQELPHIWESGLAPPRYKAFKDGNKRLIQRSPKKKDVKN.

Residues 178 to 349 enclose the Helicase ATP-binding domain; it reads YQELQRSGRA…KNRELFGGVA (172 aa). 191-198 contributes to the ATP binding site; sequence MACRCGKT. The DEAH box signature appears at 298 to 301; it reads DECH. One can recognise a Helicase C-terminal domain in the interval 394 to 553; that stretch reads QIIMALAYLK…RFYEHLLNPS (160 aa).

The protein belongs to the asfivirus helicase A859L family.

In African swine fever virus (isolate Pig/Kenya/KEN-50/1950) (ASFV), this protein is Probable helicase A859L.